The following is a 46-amino-acid chain: Diuretic hormone class 1 (46 aa).

Ile46 is subject to Isoleucine amide.

It is found in the secreted. Regulation of fluid secretion. Stimulates primary urine secretion by Malpighian tubules and causes a dose-dependent stimulation of cAMP levels in the tubules. Has a greater effect on the transport of Na(+) then K(+) ions. In vitro, has synergistic effects with the smaller diuretic hormone DH(31) which co-occurs with it. The chain is Diuretic hormone class 1 from Diploptera punctata (Pacific beetle cockroach).